The chain runs to 208 residues: N-(5'-phosphoribosyl)anthranilate isomerase (208 aa).

This sequence belongs to the TrpF family.

The catalysed reaction is N-(5-phospho-beta-D-ribosyl)anthranilate = 1-(2-carboxyphenylamino)-1-deoxy-D-ribulose 5-phosphate. Its pathway is amino-acid biosynthesis; L-tryptophan biosynthesis; L-tryptophan from chorismate: step 3/5. The chain is N-(5'-phosphoribosyl)anthranilate isomerase from Desulforamulus reducens (strain ATCC BAA-1160 / DSM 100696 / MI-1) (Desulfotomaculum reducens).